The sequence spans 409 residues: Calsequestrin-2 (409 aa).

An N-terminal signal peptide occupies residues 1–19 (MKRAHLFVVGVYLLSSCRA). The residue at position 282 (Tyr-282) is a Phosphotyrosine. The N-linked (GlcNAc...) asparagine glycan is linked to Asn-335. A disordered region spans residues 364-409 (DVLSGKINTEDDDNEDEDDDDDNDDDDDDNGNSDEEDNDDSDEDDE). Over residues 373 to 409 (EDDDNEDEDDDDDNDDDDDDNGNSDEEDNDDSDEDDE) the composition is skewed to acidic residues.

It belongs to the calsequestrin family. Monomer, homodimer and homooligomer. Mostly monomeric in the absence of calcium. Forms higher oligomers in a calcium-dependent manner. Dimers associate to form tetramers, that then form linear homomer chains. Interacts with ASPH and TRDN. Phosphorylation in the C-terminus, probably by CK2, moderately increases calcium buffering capacity. In terms of processing, N-glycosylated. Detected in heart muscle (at protein level).

It localises to the sarcoplasmic reticulum lumen. Its function is as follows. Calsequestrin is a high-capacity, moderate affinity, calcium-binding protein and thus acts as an internal calcium store in muscle. Calcium ions are bound by clusters of acidic residues at the protein surface, especially at the interface between subunits. Can bind around 60 Ca(2+) ions. Regulates the release of lumenal Ca(2+) via the calcium release channel RYR2; this plays an important role in triggering muscle contraction. Plays a role in excitation-contraction coupling in the heart and in regulating the rate of heart beats. The polypeptide is Calsequestrin-2 (CASQ2) (Oryctolagus cuniculus (Rabbit)).